Reading from the N-terminus, the 279-residue chain is Small ribosomal subunit protein uS2 (279 aa).

Composition is skewed to acidic residues over residues 1-18, 28-42, and 65-81; these read MTEN…DEAV, TATE…DESN, and ADAE…FDED. The interval 1–81 is disordered; it reads MTENDNEVVE…ELEGPTFDED (81 aa).

It belongs to the universal ribosomal protein uS2 family.

This chain is Small ribosomal subunit protein uS2, found in Haloquadratum walsbyi (strain DSM 16790 / HBSQ001).